Consider the following 297-residue polypeptide: Putative S-adenosyl-L-methionine-dependent methyltransferase Mjls_1072 (297 aa).

Residues D124 and D153 to L154 each bind S-adenosyl-L-methionine.

The protein belongs to the UPF0677 family.

Exhibits S-adenosyl-L-methionine-dependent methyltransferase activity. This is Putative S-adenosyl-L-methionine-dependent methyltransferase Mjls_1072 from Mycobacterium sp. (strain JLS).